We begin with the raw amino-acid sequence, 92 residues long: Non-structural protein 6 (92 aa).

Belongs to the rotavirus A NSP6 family. In terms of assembly, interacts with NSP2 and NSP5.

It localises to the host cytoplasm. The protein localises to the host mitochondrion. The sequence is that of Non-structural protein 6 from Rotavirus A (strain RVA/Human/Philippines/L26/1987/G12P1B[4]) (RV-A).